A 181-amino-acid polypeptide reads, in one-letter code: Acireductone dioxygenase (181 aa).

Residues His-97, His-99, Glu-103, and His-141 each coordinate Fe(2+). Ni(2+)-binding residues include His-97, His-99, Glu-103, and His-141.

It belongs to the acireductone dioxygenase (ARD) family. Monomer. It depends on Fe(2+) as a cofactor. Requires Ni(2+) as cofactor.

The enzyme catalyses 1,2-dihydroxy-5-(methylsulfanyl)pent-1-en-3-one + O2 = 3-(methylsulfanyl)propanoate + CO + formate + 2 H(+). It catalyses the reaction 1,2-dihydroxy-5-(methylsulfanyl)pent-1-en-3-one + O2 = 4-methylsulfanyl-2-oxobutanoate + formate + 2 H(+). The protein operates within amino-acid biosynthesis; L-methionine biosynthesis via salvage pathway; L-methionine from S-methyl-5-thio-alpha-D-ribose 1-phosphate: step 5/6. In terms of biological role, catalyzes 2 different reactions between oxygen and the acireductone 1,2-dihydroxy-3-keto-5-methylthiopentene (DHK-MTPene) depending upon the metal bound in the active site. Fe-containing acireductone dioxygenase (Fe-ARD) produces formate and 2-keto-4-methylthiobutyrate (KMTB), the alpha-ketoacid precursor of methionine in the methionine recycle pathway. Ni-containing acireductone dioxygenase (Ni-ARD) produces methylthiopropionate, carbon monoxide and formate, and does not lie on the methionine recycle pathway. The protein is Acireductone dioxygenase of Pseudomonas aeruginosa (strain UCBPP-PA14).